Consider the following 501-residue polypeptide: Probable cytosol aminopeptidase (501 aa).

Mn(2+) contacts are provided by Lys-270 and Asp-275. Lys-282 is a catalytic residue. Residues Asp-293, Asp-352, and Glu-354 each contribute to the Mn(2+) site. The active site involves Arg-356.

Belongs to the peptidase M17 family. Mn(2+) serves as cofactor.

The protein resides in the cytoplasm. It catalyses the reaction Release of an N-terminal amino acid, Xaa-|-Yaa-, in which Xaa is preferably Leu, but may be other amino acids including Pro although not Arg or Lys, and Yaa may be Pro. Amino acid amides and methyl esters are also readily hydrolyzed, but rates on arylamides are exceedingly low.. The catalysed reaction is Release of an N-terminal amino acid, preferentially leucine, but not glutamic or aspartic acids.. Presumably involved in the processing and regular turnover of intracellular proteins. Catalyzes the removal of unsubstituted N-terminal amino acids from various peptides. In Wigglesworthia glossinidia brevipalpis, this protein is Probable cytosol aminopeptidase.